We begin with the raw amino-acid sequence, 1332 residues long: DNA-directed RNA polymerase subunit beta'' (1332 aa).

Zn(2+)-binding residues include C220, C291, C298, and C301.

The protein belongs to the RNA polymerase beta' chain family. RpoC2 subfamily. In plastids the minimal PEP RNA polymerase catalytic core is composed of four subunits: alpha, beta, beta', and beta''. When a (nuclear-encoded) sigma factor is associated with the core the holoenzyme is formed, which can initiate transcription. Requires Zn(2+) as cofactor.

The protein localises to the plastid. The protein resides in the chloroplast. The catalysed reaction is RNA(n) + a ribonucleoside 5'-triphosphate = RNA(n+1) + diphosphate. DNA-dependent RNA polymerase catalyzes the transcription of DNA into RNA using the four ribonucleoside triphosphates as substrates. The sequence is that of DNA-directed RNA polymerase subunit beta'' from Lotus japonicus (Lotus corniculatus var. japonicus).